Consider the following 215-residue polypeptide: Ribosome maturation factor RimP (215 aa).

The segment at 180-215 is disordered; it reads KDNRARKEAKKRRGEPDDDVPEGAEADATEEHEQES. Residues 195–207 are compositionally biased toward acidic residues; the sequence is PDDDVPEGAEADA.

This sequence belongs to the RimP family.

It localises to the cytoplasm. Functionally, required for maturation of 30S ribosomal subunits. The protein is Ribosome maturation factor RimP of Mesorhizobium japonicum (strain LMG 29417 / CECT 9101 / MAFF 303099) (Mesorhizobium loti (strain MAFF 303099)).